The following is a 273-amino-acid chain: Undecaprenyl-diphosphatase (273 aa).

The next 8 membrane-spanning stretches (helical) occupy residues I3 to P23, G48 to F68, L89 to E109, L116 to A136, I151 to F171, A192 to L212, F225 to L245, and L253 to A273.

The protein belongs to the UppP family.

The protein resides in the cell membrane. It catalyses the reaction di-trans,octa-cis-undecaprenyl diphosphate + H2O = di-trans,octa-cis-undecaprenyl phosphate + phosphate + H(+). Its function is as follows. Catalyzes the dephosphorylation of undecaprenyl diphosphate (UPP). Confers resistance to bacitracin. In Anoxybacillus flavithermus (strain DSM 21510 / WK1), this protein is Undecaprenyl-diphosphatase.